Consider the following 335-residue polypeptide: UPF0324 membrane protein gbs1193 (335 aa).

Transmembrane regions (helical) follow at residues 20-42 (SWLLGLYLPLIGAPVFAILIGII), 57-79 (IAFTSKYILQTAVVLLGFGLNLM), 84-106 (VGISSLPIIIMTISISLIIAYVL), 116-138 (IATLIGVGSSICGGSAIAATAPV), 151-173 (SVIFLFNILAALIFPTLGNFIGL), 210-232 (GATIVKLTRTLAIIPITIVLSIY), 253-275 (VLYFILASLLTTIVASLGFSLRI), 285-304 (FFIVMAMGAIGINTNVSKLI), and 311-333 (ILLGAACWLGIIIVSLTMQAILG).

Belongs to the UPF0324 family.

The protein resides in the cell membrane. This Streptococcus agalactiae serotype III (strain NEM316) protein is UPF0324 membrane protein gbs1193.